Here is a 188-residue protein sequence, read N- to C-terminus: Killer cell lectin-like receptor subfamily G member 1 (188 aa).

Topologically, residues 1 to 33 (MADSSIYSTLELPEAPQVQDESRWKLKAVLHRP) are cytoplasmic. The ITIM motif signature appears at 5 to 10 (SIYSTL). A helical; Signal-anchor for type II membrane protein transmembrane segment spans residues 34–56 (HLSRFAMVALGLLTVILMSLLMY). Residues 57–188 (QRILCCGSKD…LQWICKKVLY (132 aa)) lie on the Extracellular side of the membrane. Cys75 and Cys86 are oxidised to a cystine. Asn82 and Asn97 each carry an N-linked (GlcNAc...) asparagine glycan. The C-type lectin domain maps to 82–184 (NGSHCYYFSM…CEVALQWICK (103 aa)). 2 disulfide bridges follow: Cys103/Cys183 and Cys162/Cys175.

As to quaternary structure, forms a monomer and homodimer; disulfide-linked. Interacts (via ITIM motif) with PTPN11 and INPP5D. Post-translationally, phosphorylated in response to monoclonal antibody G63 binding and antigenic stimulation. As to expression, expressed specifically on natural killer (NK) cells and activated CD8 T-cells. Not detected in spleen, thymus, lymph node, testis, brain or kidney. Not detected on mast cell lines, bone marrow-derived mast cells, or peritoneal mast cells.

It localises to the cell membrane. Functionally, plays an inhibitory role on natural killer (NK) cells and T-cell functions upon binding to their non-MHC ligands. May mediate missing self recognition by binding to a highly conserved site on classical cadherins, enabling it to monitor expression of E-cadherin/CDH1, N-cadherin/CDH2 and R-cadherin/CDH4 on target cells. This chain is Killer cell lectin-like receptor subfamily G member 1 (Klrg1), found in Mus musculus (Mouse).